Reading from the N-terminus, the 347-residue chain is MSVMFDPQAAIYPFPPKPTPLNDDEKQFYREKIKRLLKERNAVMVAHYYTDPEIQQLAEETGGCISDSLEMARFGAKHAASTLLVAGVRFMGETAKILSPEKNILMPTLAAECSLDLGCPIDEFSAFCDAHPDRTVVVYANTSAAVKARADWVVTSSIAVELIEHLDSLGEKIIWAPDRHLGNYVQKQTGADVLCWQGACIVHDEFKTQALTRLKKIYPYAALLVHPESPQSIVEMADAVGSTSQLIKAAKTLPHRQLIVATDRGIFYKMQQAVPEKELLEAPTAGEGATCRSCAHCPWMAMNGLKAIAEGLEQGGAAHEIQVDAALREGALLPLNRMLDFAATLRA.

The iminosuccinate site is built by His47 and Ser68. Residue Cys113 participates in [4Fe-4S] cluster binding. Residues 139–141 (YAN) and Ser156 each bind iminosuccinate. Cys200 serves as a coordination point for [4Fe-4S] cluster. Iminosuccinate is bound by residues 226-228 (HPE) and Thr243. Cys297 contributes to the [4Fe-4S] cluster binding site.

It belongs to the quinolinate synthase family. Type 1 subfamily. It depends on [4Fe-4S] cluster as a cofactor.

The protein localises to the cytoplasm. The enzyme catalyses iminosuccinate + dihydroxyacetone phosphate = quinolinate + phosphate + 2 H2O + H(+). Its pathway is cofactor biosynthesis; NAD(+) biosynthesis; quinolinate from iminoaspartate: step 1/1. Its function is as follows. Catalyzes the condensation of iminoaspartate with dihydroxyacetone phosphate to form quinolinate. The chain is Quinolinate synthase from Salmonella enteritidis PT4 (strain P125109).